The primary structure comprises 377 residues: Nitric oxide reductase FlRd-NAD(+) reductase (377 aa).

This sequence belongs to the FAD-dependent oxidoreductase family. Requires FAD as cofactor.

The protein localises to the cytoplasm. The catalysed reaction is 2 reduced [nitric oxide reductase rubredoxin domain] + NAD(+) + H(+) = 2 oxidized [nitric oxide reductase rubredoxin domain] + NADH. It participates in nitrogen metabolism; nitric oxide reduction. One of at least two accessory proteins for anaerobic nitric oxide (NO) reductase. Reduces the rubredoxin moiety of NO reductase. In Escherichia coli (strain K12 / MC4100 / BW2952), this protein is Nitric oxide reductase FlRd-NAD(+) reductase.